The following is a 385-amino-acid chain: Protein pelota homolog (385 aa).

Lys-162 is covalently cross-linked (Glycyl lysine isopeptide (Lys-Gly) (interchain with G-Cter in SUMO2)). Ser-374, Ser-380, Ser-381, and Ser-382 each carry phosphoserine.

The protein belongs to the eukaryotic release factor 1 family. Pelota subfamily. As to quaternary structure, component of the Pelota-HBS1L complex, also named Dom34-Hbs1 complex, composed of PELO and HBS1L. Interacts with PINK1. Interacts with ABCE1. Interacts with CNOT4. Requires a divalent metal cation as cofactor. Ubiquitously expressed.

The protein resides in the cytoplasm. Its function is as follows. Component of the Pelota-HBS1L complex, a complex that recognizes stalled ribosomes and triggers the No-Go Decay (NGD) pathway. In the Pelota-HBS1L complex, PELO recognizes ribosomes stalled at the 3' end of an mRNA and engages stalled ribosomes by destabilizing mRNA in the mRNA channel. Following mRNA extraction from stalled ribosomes by the SKI complex, the Pelota-HBS1L complex promotes recruitment of ABCE1, which drives the disassembly of stalled ribosomes, followed by degradation of damaged mRNAs as part of the NGD pathway. As part of the PINK1-regulated signaling, upon mitochondrial damage is recruited to the ribosome/mRNA-ribonucleoprotein complex associated to mitochondrial outer membrane thereby enabling the recruitment of autophagy receptors and induction of mitophagy. The protein is Protein pelota homolog of Mus musculus (Mouse).